Here is a 285-residue protein sequence, read N- to C-terminus: ATP phosphoribosyltransferase (285 aa).

This sequence belongs to the ATP phosphoribosyltransferase family. Long subfamily. Requires Mg(2+) as cofactor.

Its subcellular location is the cytoplasm. The enzyme catalyses 1-(5-phospho-beta-D-ribosyl)-ATP + diphosphate = 5-phospho-alpha-D-ribose 1-diphosphate + ATP. The protein operates within amino-acid biosynthesis; L-histidine biosynthesis; L-histidine from 5-phospho-alpha-D-ribose 1-diphosphate: step 1/9. Feedback inhibited by histidine. Functionally, catalyzes the condensation of ATP and 5-phosphoribose 1-diphosphate to form N'-(5'-phosphoribosyl)-ATP (PR-ATP). Has a crucial role in the pathway because the rate of histidine biosynthesis seems to be controlled primarily by regulation of HisG enzymatic activity. This Metallosphaera sedula (strain ATCC 51363 / DSM 5348 / JCM 9185 / NBRC 15509 / TH2) protein is ATP phosphoribosyltransferase.